A 142-amino-acid polypeptide reads, in one-letter code: uncharacterized protein (142 aa).

This is an uncharacterized protein from Saccharomyces cerevisiae (strain ATCC 204508 / S288c) (Baker's yeast).